The primary structure comprises 1323 residues: MFQEKSEKSSFPKRSSSLRSPSDSPAITSKNVFMFVNYSKDWPLILVGILLMGGSAIATLMNTYIYGEIMGKLSQFYLQDQSNHSFSQDIVKLCVGLIGIGCCKMILVWLGMFTWLKFGEIQQSRARMQIYNKIINESQSWYDSKQNLIGQLTQINRCIEELRSCNGEILASLMQTIVLILALLIMSFYQSWSTTLIIMASFPIMALCGWYFGKLTYKAQQDENEVTSKASKVFNWCYVNPEMVRFFNSKNIELTKFKQLIEKSAQFYYKLSHAVAANTAVLKTLTLMMFVQGFWFGNYLLSHKTITINQLFTCFSSCLMLGQAVSGITELLAILNTGHAAADKISGFLLQPPSKAKLLLLHSKYPPFEIGSIYFKNVWFESNSQNSVAILQDVSFGILQNQFNYVIGKSGSGKSTIAKLLMRLYSVSRGTIEIDTVSIDKLDPKYICQNITLLEQNPVIFDDKTIAENIAIAIVDDYDSLQAIPYYLIEQSAHFALLSDLDLNMKVNHLTLSGGQQQRISIARAYLKNSPVLIMDESFSALDTETKQGLIEKVKKWRIGKTTIFITHEYKNILDDENVIILDQGMIKNQGQFKKMKNEEIVQNYKSQGIETSSYETTSQSFSDNTKLPDGDYNYKTNPYILKDLESQIKEDTDNEKLMGVLAILRYCSSTINGKSLLGFGILLAIFQGVSSPVFSYCFSKLLSTSLDSSIGLNSTQKILQWSCISLSIAIFTGVTSYLSEFILNYCGENWIVSLRQLTFFKLNNQDLSFFTGFDTNWSSSEITALLMNDTRDLRNLISQFFPLLANLVSMTLIGIIWSIVSGWKLALVGISFVPLVLLVTVLYGKILESIENKYKCKVNNVELDLYRTITTIRTIKIFNIQQYFETVFKEDLKVLNSIGVYRALQTGIGFAISDLFSSIGQAIILFYGMKLISQFQYNYSQLLQVITLLSFTISNASILIHQLPEITRGQRAGTFIVKLLKDITSTMEVNDSCGVSSVRKRNSKSGSDSIGTIGPVKDNQLFKKVTTDNDTLAISFNNVSFSYPNKLPYILQLKSISLDVKKFTTIGIVGQSGSGKSTILKILFRLYDIKISPDSNTTKKYHDQTVKIFNQNLYLINSGLLCQTIAIVPQFPKFFSGTIYDNLTYGINNTNSAGSNSSSSVSDSEIIKILKLVNLHQFIVSLPQGLLTIMNDSDNDNDNGNENENENENGNTISTSSSTSFTFSGGQLQLLAIARALLRNPKILLLDECTSNLDPITTKIIINVIKSLHGKLTILFVTHDKELMRIADNLIVMKDGQIVEQGDFQQLISNDGEFTKITKTII.

Positions 1 to 10 (MFQEKSEKSS) are enriched in basic and acidic residues. Residues 1–23 (MFQEKSEKSSFPKRSSSLRSPSD) are disordered. Residues 12–23 (PKRSSSLRSPSD) are compositionally biased toward low complexity. An N-linked (GlcNAc...) asparagine glycan is attached at asparagine 37. A helical transmembrane segment spans residues 42–62 (WPLILVGILLMGGSAIATLMN). Positions 45-337 (ILVGILLMGG…ITELLAILNT (293 aa)) constitute an ABC transmembrane type-1 1 domain. Asparagine 83 carries an N-linked (GlcNAc...) asparagine glycan. The chain crosses the membrane as a helical span at residues 93-113 (LCVGLIGIGCCKMILVWLGMF). N-linked (GlcNAc...) asparagine glycosylation occurs at asparagine 136. The next 4 helical transmembrane spans lie at 169 to 189 (ILAS…MSFY), 192 to 212 (WSTT…GWYF), 281 to 301 (VLKT…NYLL), and 315 to 335 (FSSC…LAIL). The ABC transporter 1 domain occupies 373–609 (IYFKNVWFES…EIVQNYKSQG (237 aa)). 408 to 415 (GKSGSGKS) provides a ligand contact to ATP. N-linked (GlcNAc...) asparagine glycosylation occurs at asparagine 450. Residues 677-697 (LLGFGILLAIFQGVSSPVFSY) traverse the membrane as a helical segment. The ABC transmembrane type-1 2 domain occupies 678 to 969 (LGFGILLAIF…LIHQLPEITR (292 aa)). A glycan (N-linked (GlcNAc...) asparagine) is linked at asparagine 714. A helical membrane pass occupies residues 724-744 (CISLSIAIFTGVTSYLSEFIL). 2 N-linked (GlcNAc...) asparagine glycosylation sites follow: asparagine 777 and asparagine 789. The next 3 membrane-spanning stretches (helical) occupy residues 801–821 (FFPL…WSIV), 828–848 (LVGI…GKIL), and 909–929 (IGFA…LFYG). The N-linked (GlcNAc...) asparagine glycan is linked to asparagine 939. A helical membrane pass occupies residues 941–961 (SQLLQVITLLSFTISNASILI). Residues asparagine 991, asparagine 1030, and asparagine 1039 are each glycosylated (N-linked (GlcNAc...) asparagine). The region spanning 1035 to 1321 (ISFNNVSFSY…DGEFTKITKT (287 aa)) is the ABC transporter 2 domain. 1071–1078 (GQSGSGKS) contributes to the ATP binding site. N-linked (GlcNAc...) asparagine glycosylation is present at asparagine 1097. A helical membrane pass occupies residues 1120-1140 (GLLCQTIAIVPQFPKFFSGTI). Residues asparagine 1143, asparagine 1149, and asparagine 1157 are each glycosylated (N-linked (GlcNAc...) asparagine). A helical transmembrane segment spans residues 1170–1190 (ILKLVNLHQFIVSLPQGLLTI). Asparagine 1192 carries an N-linked (GlcNAc...) asparagine glycan. The segment covering 1194-1208 (SDNDNDNGNENENEN) has biased composition (acidic residues). Residues 1194–1217 (SDNDNDNGNENENENENGNTISTS) are disordered.

It belongs to the ABC transporter superfamily. Alpha-factor sex pheromone exporter (TC 3.A.1.206) family.

It localises to the membrane. It catalyses the reaction an [alpha-factor](in) + ATP + H2O = an [alpha-factor](out) + ADP + phosphate + H(+). The protein is Alpha-factor-transporting ATPase (HST6) of Candida albicans (strain WO-1) (Yeast).